The following is a 388-amino-acid chain: MGNSSSSGSHRPPRPASSESALPPAAAAAEELSSYEAACRSDPELRTFDTTLQRRTSRAISTLAVGVEVRSLSLESLREVTGCLLDMNQEVVRVILDCKKDIWKSPELFDLVEDYFESSLHTLDFCTALDKCLKRARDSQLLLHVALQRFDDEEDNDAAAAGQEDAAPSARYARTLHELRQFKAAGDPFTEEFFSAFQAVYRQQLTMLEKLQQRKHRLDKKVRAIKAWRRVSSIIFATTFAAVLICSVVAAAIAAPPVAAALAAAASIPVGSMGKWIDSLLKGYQDALRGQKEVVSAMQVGTFIAIKDLDSIRVLINRVELEISSMIDCVEFAERDEEAVKFGVEEIKKKLEVFMKSVEDLGEQADRCSRDIRRARTVVLQRIIRHPS.

The interval 1–25 is disordered; the sequence is MGNSSSSGSHRPPRPASSESALPPA. The stretch at 198–227 forms a coiled coil; that stretch reads QAVYRQQLTMLEKLQQRKHRLDKKVRAIKA. 2 consecutive transmembrane segments (helical) span residues 234–254 and 257–277; these read IIFATTFAAVLICSVVAAAIA and PVAAALAAAASIPVGSMGKWI. Residues 344-376 adopt a coiled-coil conformation; the sequence is VEEIKKKLEVFMKSVEDLGEQADRCSRDIRRAR.

Belongs to the UPF0496 family.

It localises to the membrane. The polypeptide is UPF0496 protein 1 (Oryza sativa subsp. japonica (Rice)).